The primary structure comprises 155 residues: Ribosomal RNA large subunit methyltransferase H (155 aa).

S-adenosyl-L-methionine is bound by residues leucine 73, glycine 104, and 123–128; that span reads LSPLTL.

It belongs to the RNA methyltransferase RlmH family. Homodimer.

It is found in the cytoplasm. It carries out the reaction pseudouridine(1915) in 23S rRNA + S-adenosyl-L-methionine = N(3)-methylpseudouridine(1915) in 23S rRNA + S-adenosyl-L-homocysteine + H(+). Its function is as follows. Specifically methylates the pseudouridine at position 1915 (m3Psi1915) in 23S rRNA. This chain is Ribosomal RNA large subunit methyltransferase H, found in Pseudomonas putida (strain GB-1).